A 695-amino-acid polypeptide reads, in one-letter code: Probable glucan endo-1,3-beta-glucosidase btgC (695 aa).

Disordered stretches follow at residues 1 to 53 (MSGP…THHG), 117 to 140 (RRGT…GSDN), 175 to 258 (GPAG…RSQA), and 286 to 314 (ETSY…STGS). Residues 1–317 (MSGPHRTFSF…PKPSTGSRKR (317 aa)) are Cytoplasmic-facing. Positions 36-45 (PISNMSSSPG) are enriched in polar residues. The segment covering 188–198 (HLGTSNSSQRN) has biased composition (polar residues). The segment covering 231–241 (NPEEIADDGDD) has biased composition (acidic residues). The helical; Signal-anchor for type II membrane protein transmembrane segment at 318-338 (GWIIGAILAVIIIGAIVGGAV) threads the bilayer. At 339–695 (GGTIGHKDSG…IPDCGGKTAA (357 aa)) the chain is on the extracellular side. The disordered stretch occupies residues 346-372 (DSGDSASGSSASTQSASGDTDTNGDLD). The segment covering 349 to 366 (DSASGSSASTQSASGDTD) has biased composition (low complexity). N-linked (GlcNAc...) asparagine glycosylation is found at Asn415, Asn438, and Asn466. The active-site Proton donor is the Glu498. Catalysis depends on Glu597, which acts as the Nucleophile. A glycan (N-linked (GlcNAc...) asparagine) is linked at Asn642.

This sequence belongs to the glycosyl hydrolase 17 family.

The protein localises to the cell membrane. The enzyme catalyses Hydrolysis of (1-&gt;3)-beta-D-glucosidic linkages in (1-&gt;3)-beta-D-glucans.. In terms of biological role, glucanases play a role in cell expansion during growth, in cell-cell fusion during mating, and in spore release during sporulation. This enzyme may be involved in beta-glucan degradation. Active on laminarin and lichenan. The sequence is that of Probable glucan endo-1,3-beta-glucosidase btgC (btgC) from Aspergillus clavatus (strain ATCC 1007 / CBS 513.65 / DSM 816 / NCTC 3887 / NRRL 1 / QM 1276 / 107).